The primary structure comprises 583 residues: Septin-9 (583 aa).

The residue at position 1 (M1) is an N-acetylmethionine. A compositionally biased stretch (polar residues) spans M1–G14. The segment at M1 to T49 is disordered. Position 30 is a phosphoserine (S30). Residues T42 and T49 each carry the phosphothreonine modification. K62 bears the N6-acetyllysine mark. The tract at residues D79–S105 is disordered. Phosphoserine is present on residues S82, S85, and S89. T143 is modified (phosphothreonine). Residues V166–D252 form a disordered region. A compositionally biased stretch (polar residues) spans L204–S221. Y276 is subject to Phosphotyrosine. A Septin-type G domain is found at Q293–E565. The interval G303–S310 is G1 motif. G303 to S310 lines the GTP pocket. Phosphoserine is present on residues S325 and S330. GTP contacts are provided by residues T337, G363, K443 to E451, G499, and R514. The interval D360–G363 is G3 motif. A G4 motif region spans residues A442–D445.

This sequence belongs to the TRAFAC class TrmE-Era-EngA-EngB-Septin-like GTPase superfamily. Septin GTPase family. Septins polymerize into heterooligomeric protein complexes that form filaments, and associate with cellular membranes, actin filaments, and microtubules. GTPase activity is required for filament formation. Interacts with SEPTIN2, SEPTIN6, SEPTIN7, SEPTIN11 and SEPTIN14. Interacts with RTKN and ARHGEF18. In terms of tissue distribution, expressed in all tissues examined except muscle. Isoforms are differentially expressed in testes, kidney, liver, heart, spleen and brain.

The protein resides in the cytoplasm. The protein localises to the cytoskeleton. Its function is as follows. Filament-forming cytoskeletal GTPase. May play a role in cytokinesis (Potential). The polypeptide is Septin-9 (Mus musculus (Mouse)).